The following is a 1000-amino-acid chain: Kinesin-like protein CIN8 (1000 aa).

The span at 1-26 (MPAENQNTGQDRSSNSISKNGNSQVG) shows a compositional bias: polar residues. Residues 1–28 (MPAENQNTGQDRSSNSISKNGNSQVGCH) are disordered. One can recognise a Kinesin motor domain in the interval 36 to 477 (NITVAVRCRG…LEYASKAKNI (442 aa)). 128–135 (GMTSTGKT) serves as a coordination point for ATP. A compositionally biased stretch (low complexity) spans 220–242 (ANNTTSNSASSSRSNSRNSSPRS). Disordered stretches follow at residues 220–248 (ANNT…DLTP) and 260–312 (KSLP…PNDQ). The segment covering 261–276 (SLPNTIKQQYQQQQAV) has biased composition (polar residues). Low complexity predominate over residues 277 to 301 (NSRNNSSSNSGSTTNNASSNTNTNN). The segment covering 302-312 (GQRSSMAPNDQ) has biased composition (polar residues). Coiled-coil stretches lie at residues 518 to 615 (MSQD…MALH) and 860 to 904 (ISVM…IKNS). Residues 970–1000 (VISPKKHAIEDENKSSENVDNEGSRKMLKIE) are disordered. Ser-972 is modified (phosphoserine). A compositionally biased stretch (basic and acidic residues) spans 976-1000 (HAIEDENKSSENVDNEGSRKMLKIE).

The protein belongs to the TRAFAC class myosin-kinesin ATPase superfamily. Kinesin family. BimC subfamily.

The protein localises to the cytoplasm. It localises to the cytoskeleton. The protein resides in the spindle. It is found in the mitochondrion. Elongates the mitotic spindle by interacting with spindle microtubules to generate an outward force pushing spindle poles apart. Following spindle assembly, CIN8 and KIP1 apparently act to oppose a force, possibly generated by KAR3, that draws separated poles back together. This Saccharomyces cerevisiae (strain ATCC 204508 / S288c) (Baker's yeast) protein is Kinesin-like protein CIN8 (CIN8).